A 380-amino-acid polypeptide reads, in one-letter code: Ubiquitin-like protein 7 (380 aa).

The 81-residue stretch at 18-98 folds into the Ubiquitin-like domain; sequence TPKSILRLPE…VLRKSWPEPD (81 aa). Residues 200-313 are disordered; it reads APMPGTDSSS…SSGVQSGTPI (114 aa). Residues 206–221 show a composition bias toward low complexity; that stretch reads DSSSRSMPSSSYRDMP. Position 230 is a phosphoserine (S230). Low complexity-rich tracts occupy residues 240–253 and 270–293; these read TRST…SSRP and SELA…TPGT. Residues 294–313 show a composition bias toward polar residues; the sequence is QGHSSGTSPMSSGVQSGTPI. The UBA domain occupies 333-377; that stretch reads SLQSQWQPQLQQLRDMGIQDDELSLRALQATGGDIQAALELIFAG.

Binds ubiquitin. Interacts with MAVS; this interaction enhances TRIM21-dependent 'Lys-27'-linked polyubiquitination of MAVS. Post-translationally, deubiquitinated by OTUD4 which stabilizes UBL7 expression. Ubiquitous. Highly expressed in heart, skeletal muscle, testis, thyroid and adrenal gland.

Its function is as follows. Interferon-stimulated protein that positively regulates RNA virus-triggered innate immune signaling. Mechanistically, promotes 'Lys-27'-linked polyubiquitination of MAVS through TRIM21 leading to enhanced the IFN signaling pathway. This Homo sapiens (Human) protein is Ubiquitin-like protein 7 (UBL7).